Consider the following 219-residue polypeptide: 2-hydroxy-3-keto-5-methylthiopentenyl-1-phosphate phosphatase (219 aa).

Belongs to the HAD-like hydrolase superfamily. MtnX family.

The catalysed reaction is 2-hydroxy-5-methylsulfanyl-3-oxopent-1-enyl phosphate + H2O = 1,2-dihydroxy-5-(methylsulfanyl)pent-1-en-3-one + phosphate. The protein operates within amino-acid biosynthesis; L-methionine biosynthesis via salvage pathway; L-methionine from S-methyl-5-thio-alpha-D-ribose 1-phosphate: step 4/6. Functionally, dephosphorylates 2-hydroxy-3-keto-5-methylthiopentenyl-1-phosphate (HK-MTPenyl-1-P) yielding 1,2-dihydroxy-3-keto-5-methylthiopentene (DHK-MTPene). This chain is 2-hydroxy-3-keto-5-methylthiopentenyl-1-phosphate phosphatase, found in Bacillus cereus (strain ZK / E33L).